Consider the following 473-residue polypeptide: Photosystem II CP43 reaction center protein (473 aa).

The propeptide occupies 1 to 14 (MKTLYSLRRSYPVE). Thr-15 is subject to N-acetylthreonine. A Phosphothreonine modification is found at Thr-15. The next 5 helical transmembrane spans lie at 69 to 93 (LFEV…PHLA), 134 to 155 (LIGP…KDRN), 178 to 200 (KALY…RKIT), 255 to 275 (KPFA…LSYS), and 291 to 312 (WFNN…ASQA). Residue Glu-367 coordinates [CaMn4O5] cluster. A helical transmembrane segment spans residues 447-471 (RARAAAAGFEKGIDRDFEPVLSMTP).

It belongs to the PsbB/PsbC family. PsbC subfamily. In terms of assembly, PSII is composed of 1 copy each of membrane proteins PsbA, PsbB, PsbC, PsbD, PsbE, PsbF, PsbH, PsbI, PsbJ, PsbK, PsbL, PsbM, PsbT, PsbX, PsbY, PsbZ, Psb30/Ycf12, at least 3 peripheral proteins of the oxygen-evolving complex and a large number of cofactors. It forms dimeric complexes. It depends on Binds multiple chlorophylls and provides some of the ligands for the Ca-4Mn-5O cluster of the oxygen-evolving complex. It may also provide a ligand for a Cl- that is required for oxygen evolution. PSII binds additional chlorophylls, carotenoids and specific lipids. as a cofactor.

The protein localises to the plastid. Its subcellular location is the chloroplast thylakoid membrane. Its function is as follows. One of the components of the core complex of photosystem II (PSII). It binds chlorophyll and helps catalyze the primary light-induced photochemical processes of PSII. PSII is a light-driven water:plastoquinone oxidoreductase, using light energy to abstract electrons from H(2)O, generating O(2) and a proton gradient subsequently used for ATP formation. In Pinus koraiensis (Korean pine), this protein is Photosystem II CP43 reaction center protein.